We begin with the raw amino-acid sequence, 95 residues long: Sec-independent protein translocase protein TatA (95 aa).

The chain crosses the membrane as a helical span at residues 1–21; that stretch reads MFGRLGAPEIILILVVIILLF. Positions 44–55 are enriched in basic and acidic residues; the sequence is AKAMKSEAKADD. The disordered stretch occupies residues 44-95; the sequence is AKAMKSEAKADDAAPADPPNPEQSAAQRTIQAAPGDVTSSRPVTEPTDTTKR.

The protein belongs to the TatA/E family. In terms of assembly, the Tat system comprises two distinct complexes: a TatABC complex, containing multiple copies of TatA, TatB and TatC subunits, and a separate TatA complex, containing only TatA subunits. Substrates initially bind to the TatABC complex, which probably triggers association of the separate TatA complex to form the active translocon.

The protein resides in the cell membrane. In terms of biological role, part of the twin-arginine translocation (Tat) system that transports large folded proteins containing a characteristic twin-arginine motif in their signal peptide across membranes. TatA could form the protein-conducting channel of the Tat system. This Streptomyces coelicolor (strain ATCC BAA-471 / A3(2) / M145) protein is Sec-independent protein translocase protein TatA.